A 258-amino-acid polypeptide reads, in one-letter code: UPF0246 protein ACIAD2218 (258 aa).

Belongs to the UPF0246 family.

The protein is UPF0246 protein ACIAD2218 of Acinetobacter baylyi (strain ATCC 33305 / BD413 / ADP1).